Here is a 430-residue protein sequence, read N- to C-terminus: GTPase Obg (430 aa).

Positions 1-158 (MFVDQVKISL…LDVSLELKLL (158 aa)) constitute an Obg domain. A disordered region spans residues 118-145 (KGGRGGRGNSRFATPRNPAPDFSEKGEP). Residues 159 to 329 (ADVGLVGFPS…LLYAIADKLE (171 aa)) enclose the OBG-type G domain. Residues 165–172 (GFPSVGKS), 190–194 (FTTIK), 212–215 (DLPG), 282–285 (NKMD), and 310–312 (STI) contribute to the GTP site. Ser-172 and Thr-192 together coordinate Mg(2+). Residues 352-430 (KHTPSQDKFT…ILGGEFEFVE (79 aa)) form the OCT domain.

Belongs to the TRAFAC class OBG-HflX-like GTPase superfamily. OBG GTPase family. Monomer. Mg(2+) is required as a cofactor.

It localises to the cytoplasm. An essential GTPase which binds GTP, GDP and possibly (p)ppGpp with moderate affinity, with high nucleotide exchange rates and a fairly low GTP hydrolysis rate. Plays a role in control of the cell cycle, stress response, ribosome biogenesis and in those bacteria that undergo differentiation, in morphogenesis control. This Staphylococcus aureus (strain Mu3 / ATCC 700698) protein is GTPase Obg.